Reading from the N-terminus, the 257-residue chain is Gasdermin-like protein rcd-1-1 (257 aa).

It belongs to the gasdermin family. In terms of assembly, heterooligomer; the heterooligomer with rcd-1-2 forms a ring-shaped pore complex when inserted in the membrane.

Its subcellular location is the cytoplasm. It localises to the cell membrane. Its function is as follows. Gasdermin-like protein involved in heterokaryon incompatibility, a process that ensures that during spontaneous vegetative cell fusion, only compatible cells from the same colony survive (non-self-recognition). In N.crassa, the rcd-1 locus exists as 2 incompatible alleles, rcd-1-1 (this entry) and rcd-1-2 (AC P0DW10). During the allorecognition process, forms a heterooligomer with rcd-1-2, thereby forming a functional gasdermin-like complex that binds to membranes and forms pores, triggering cell death. Binds negatively charged phospholipids, such as cardiolipin and phosphatidylserine. Also binds to phosphoinositides, preferentially to phosphatidylinositol-3-phosphate (PtdIns-3-P), PtdIns-5-P and PtdIns-3,5-P2. This is Gasdermin-like protein rcd-1-1 from Neurospora crassa (strain ATCC 24698 / 74-OR23-1A / CBS 708.71 / DSM 1257 / FGSC 987).